The following is an 857-amino-acid chain: Alanine--tRNA ligase (857 aa).

H556, H560, C658, and H662 together coordinate Zn(2+).

The protein belongs to the class-II aminoacyl-tRNA synthetase family. The cofactor is Zn(2+).

It is found in the cytoplasm. It carries out the reaction tRNA(Ala) + L-alanine + ATP = L-alanyl-tRNA(Ala) + AMP + diphosphate. Functionally, catalyzes the attachment of alanine to tRNA(Ala) in a two-step reaction: alanine is first activated by ATP to form Ala-AMP and then transferred to the acceptor end of tRNA(Ala). Also edits incorrectly charged Ser-tRNA(Ala) and Gly-tRNA(Ala) via its editing domain. The protein is Alanine--tRNA ligase of Sulfurovum sp. (strain NBC37-1).